We begin with the raw amino-acid sequence, 245 residues long: 1-(5-phosphoribosyl)-5-[(5-phosphoribosylamino)methylideneamino] imidazole-4-carboxamide isomerase (245 aa).

Residue Asp7 is the Proton acceptor of the active site. The active-site Proton donor is the Asp129.

It belongs to the HisA/HisF family.

The protein localises to the cytoplasm. It catalyses the reaction 1-(5-phospho-beta-D-ribosyl)-5-[(5-phospho-beta-D-ribosylamino)methylideneamino]imidazole-4-carboxamide = 5-[(5-phospho-1-deoxy-D-ribulos-1-ylimino)methylamino]-1-(5-phospho-beta-D-ribosyl)imidazole-4-carboxamide. The protein operates within amino-acid biosynthesis; L-histidine biosynthesis; L-histidine from 5-phospho-alpha-D-ribose 1-diphosphate: step 4/9. The chain is 1-(5-phosphoribosyl)-5-[(5-phosphoribosylamino)methylideneamino] imidazole-4-carboxamide isomerase from Edwardsiella ictaluri (strain 93-146).